Here is a 406-residue protein sequence, read N- to C-terminus: Acetate kinase (406 aa).

Asn7 is a binding site for Mg(2+). Lys14 contributes to the ATP binding site. Arg90 lines the substrate pocket. Asp147 serves as the catalytic Proton donor/acceptor. ATP contacts are provided by residues 207–211 (HLGNG), 283–285 (DMR), and 331–335 (GVGEN). Glu385 contacts Mg(2+).

Belongs to the acetokinase family. As to quaternary structure, homodimer. It depends on Mg(2+) as a cofactor. Requires Mn(2+) as cofactor.

It is found in the cytoplasm. It carries out the reaction acetate + ATP = acetyl phosphate + ADP. It functions in the pathway metabolic intermediate biosynthesis; acetyl-CoA biosynthesis; acetyl-CoA from acetate: step 1/2. Catalyzes the formation of acetyl phosphate from acetate and ATP. Can also catalyze the reverse reaction. The sequence is that of Acetate kinase from Thermosipho melanesiensis (strain DSM 12029 / CIP 104789 / BI429).